The chain runs to 490 residues: GTPase Der (490 aa).

EngA-type G domains are found at residues proline 3–glutamate 166 and isoleucine 196–valine 369. Residues glycine 9 to serine 16, aspartate 56 to isoleucine 60, asparagine 118 to aspartate 121, glycine 202 to serine 209, aspartate 249 to valine 253, and asparagine 314 to aspartate 317 contribute to the GTP site. The KH-like domain maps to threonine 370 to glutamate 454. The segment at glycine 452–arginine 490 is disordered. Over residues asparagine 470–arginine 490 the composition is skewed to basic residues.

This sequence belongs to the TRAFAC class TrmE-Era-EngA-EngB-Septin-like GTPase superfamily. EngA (Der) GTPase family. As to quaternary structure, associates with the 50S ribosomal subunit.

Functionally, GTPase that plays an essential role in the late steps of ribosome biogenesis. This Pseudomonas syringae pv. syringae (strain B728a) protein is GTPase Der.